A 76-amino-acid chain; its full sequence is MSKAHPPELKKFMDKKLSLKLNGGRHVQGILRGFDPFMNLVIDECVEMATSGQQNNIGMVVIRGNSIIMLEALERV.

The region spanning 4 to 76 (AHPPELKKFM…IIMLEALERV (73 aa)) is the Sm domain.

Belongs to the snRNP Sm proteins family. As to quaternary structure, core component of the spliceosomal U1, U2, U4 and U5 small nuclear ribonucleoproteins (snRNPs), the building blocks of the spliceosome. Most spliceosomal snRNPs contain a common set of Sm proteins, SNRPB, SNRPD1, SNRPD2, SNRPD3, SNRPE, SNRPF and SNRPG that assemble in a heptameric protein ring on the Sm site of the small nuclear RNA to form the core snRNP. Component of the U1 snRNP. The U1 snRNP is composed of the U1 snRNA and the 7 core Sm proteins SNRPB, SNRPD1, SNRPD2, SNRPD3, SNRPE, SNRPF and SNRPG, and at least three U1 snRNP-specific proteins SNRNP70/U1-70K, SNRPA/U1-A and SNRPC/U1-C. Component of the U4/U6-U5 tri-snRNP complex composed of the U4, U6 and U5 snRNAs and at least PRPF3, PRPF4, PRPF6, PRPF8, PRPF31, SNRNP200, TXNL4A, SNRNP40, SNRPB, SNRPD1, SNRPD2, SNRPD3, SNRPE, SNRPF, SNRPG, DDX23, CD2BP2, PPIH, SNU13, EFTUD2, SART1 and USP39, plus LSM2, LSM3, LSM4, LSM5, LSM6, LSM7 and LSM8. Component of the U7 snRNP complex, or U7 Sm protein core complex, that is composed of the U7 snRNA and at least LSM10, LSM11, SNRPB, SNRPD3, SNRPE, SNRPF and SNRPG; the complex does not contain SNRPD1 and SNRPD2. Component of the minor spliceosome, which splices U12-type introns. Part of the SMN-Sm complex that contains SMN1, GEMIN2/SIP1, DDX20/GEMIN3, GEMIN4, GEMIN5, GEMIN6, GEMIN7, GEMIN8, STRAP/UNRIP and the Sm proteins SNRPB, SNRPD1, SNRPD2, SNRPD3, SNRPE, SNRPF and SNRPG; catalyzes core snRNPs assembly. Forms a 6S pICln-Sm complex composed of CLNS1A/pICln, SNRPD1, SNRPD2, SNRPE, SNRPF and SNRPG; ring-like structure where CLNS1A/pICln mimics additional Sm proteins and which is unable to assemble into the core snRNP. Interacts with GEMIN2 (via N-terminus); the interaction is direct. Interacts with SNRPE; the interaction is direct.

Its subcellular location is the cytoplasm. It localises to the cytosol. The protein resides in the nucleus. Plays a role in pre-mRNA splicing as a core component of the spliceosomal U1, U2, U4 and U5 small nuclear ribonucleoproteins (snRNPs), the building blocks of the spliceosome. Component of both the pre-catalytic spliceosome B complex and activated spliceosome C complexes. As a component of the minor spliceosome, involved in the splicing of U12-type introns in pre-mRNAs. As part of the U7 snRNP it is involved in histone 3'-end processing. The chain is Small nuclear ribonucleoprotein G (SNRPG) from Bos taurus (Bovine).